We begin with the raw amino-acid sequence, 785 residues long: Neutral ceramidase (785 aa).

A signal peptide spans Met1–Val35. Asn31 carries an N-linked (GlcNAc...) asparagine glycan. The active-site Nucleophile is the Ser359. Residues Asn377, Asn675, and Asn685 are each glycosylated (N-linked (GlcNAc...) asparagine).

The protein belongs to the neutral ceramidase family. In terms of tissue distribution, expressed in seedlings, with higher levels in roots than in shoots.

The protein localises to the secreted. The protein resides in the endoplasmic reticulum. Its subcellular location is the golgi apparatus. It carries out the reaction an N-acylsphing-4-enine + H2O = sphing-4-enine + a fatty acid. Its activity is regulated as follows. Enhanced activity in the presence of calcium, magnesium, manganese and zinc ions, but inhibited activity in the presence of iron ion. Its function is as follows. Hydrolyzes the sphingolipid ceramide into sphingosine and free fatty acid. Uses ceramide instead of phytoceramide as substrate. The polypeptide is Neutral ceramidase (Oryza sativa subsp. japonica (Rice)).